A 606-amino-acid polypeptide reads, in one-letter code: MTTADARTPASKQNDGTPDGTTPDAGTPNDGAGKSIGWHKGYVQGSRPDLRVPVRQVHLTNGKHVTLYDTSGPYTDASVDTDVRRGLAPLRENWIIARGDTEEYAGRPVRPEDDGLKHTSPRGGLRNLDAVFPGRPRQPRRSRDGRPVTQLAYARRGEVTPEMEYVAIRENVEAEVVREEIAAGRAVLPANVNHPEIEPMIIGKRFLVKVNANIGNSAVTSSIEEEVDKMTWATQWGADTVMDLSTGRNIHTTREWVLRNSPVPIGTVPLYQALEKVDGRAEELTWEIYKDTVIEQAEQGVDYMTVHAGVRLPYVPLTARRKTGIVSRGGSIMAAWCLAHHKESFLYEHFEELCEILATYDVTYSLGDGLRPGSIADANDEAQFAELRTLGELNTVAKRFGVQTMIEGPGHVPMHKIKENIDLQQEICEEAPFYTLGPLTTDVAPAYDHITSGIGAAMIAWWGTAMLCYVTPKEHLGLPNRDDVKTGVITYKIAAHAADLAKGHPGAQEWDDALSDARFEFRWEDQFNLALDPDTAREFHDETLPAEPAKTAHFCSMCGPKFCSMKISQDIRRQHGGSREEIEEGMAEKSKEFAAAGNRVYLPIAD.

A compositionally biased stretch (polar residues) spans 1-13 (MTTADARTPASKQ). 2 disordered regions span residues 1–49 (MTTA…SRPD) and 105–147 (AGRP…DGRP). The span at 14–31 (NDGTPDGTTPDAGTPNDG) shows a compositional bias: low complexity. Over residues 105-117 (AGRPVRPEDDGLK) the composition is skewed to basic and acidic residues. Residues asparagine 213, methionine 242, tyrosine 271, histidine 307, 327–329 (SRG), 368–371 (DGLR), and glutamate 407 each bind substrate. Histidine 411 provides a ligand contact to Zn(2+). Tyrosine 434 serves as a coordination point for substrate. Histidine 475 lines the Zn(2+) pocket. Cysteine 555, cysteine 558, and cysteine 563 together coordinate [4Fe-4S] cluster.

The protein belongs to the ThiC family. [4Fe-4S] cluster serves as cofactor.

The catalysed reaction is 5-amino-1-(5-phospho-beta-D-ribosyl)imidazole + S-adenosyl-L-methionine = 4-amino-2-methyl-5-(phosphooxymethyl)pyrimidine + CO + 5'-deoxyadenosine + formate + L-methionine + 3 H(+). It functions in the pathway cofactor biosynthesis; thiamine diphosphate biosynthesis. Functionally, catalyzes the synthesis of the hydroxymethylpyrimidine phosphate (HMP-P) moiety of thiamine from aminoimidazole ribotide (AIR) in a radical S-adenosyl-L-methionine (SAM)-dependent reaction. This is Phosphomethylpyrimidine synthase from Streptomyces griseus subsp. griseus (strain JCM 4626 / CBS 651.72 / NBRC 13350 / KCC S-0626 / ISP 5235).